Here is a 351-residue protein sequence, read N- to C-terminus: Peptide chain release factor 1 (351 aa).

Residue Gln-229 is modified to N5-methylglutamine.

It belongs to the prokaryotic/mitochondrial release factor family. Post-translationally, methylated by PrmC. Methylation increases the termination efficiency of RF1.

The protein resides in the cytoplasm. Its function is as follows. Peptide chain release factor 1 directs the termination of translation in response to the peptide chain termination codons UAG and UAA. The protein is Peptide chain release factor 1 of Cereibacter sphaeroides (strain ATCC 17023 / DSM 158 / JCM 6121 / CCUG 31486 / LMG 2827 / NBRC 12203 / NCIMB 8253 / ATH 2.4.1.) (Rhodobacter sphaeroides).